Consider the following 275-residue polypeptide: 4-hydroxy-3-methylbut-2-enyl diphosphate reductase (275 aa).

[4Fe-4S] cluster is bound at residue cysteine 12. 2 residues coordinate (2E)-4-hydroxy-3-methylbut-2-enyl diphosphate: histidine 40 and histidine 70. Dimethylallyl diphosphate-binding residues include histidine 40 and histidine 70. Histidine 40 and histidine 70 together coordinate isopentenyl diphosphate. Cysteine 92 lines the [4Fe-4S] cluster pocket. Position 119 (histidine 119) interacts with (2E)-4-hydroxy-3-methylbut-2-enyl diphosphate. Histidine 119 contributes to the dimethylallyl diphosphate binding site. An isopentenyl diphosphate-binding site is contributed by histidine 119. The active-site Proton donor is glutamate 121. Position 151 (threonine 151) interacts with (2E)-4-hydroxy-3-methylbut-2-enyl diphosphate. Cysteine 181 serves as a coordination point for [4Fe-4S] cluster. Positions 209, 210, 211, and 251 each coordinate (2E)-4-hydroxy-3-methylbut-2-enyl diphosphate. 4 residues coordinate dimethylallyl diphosphate: serine 209, serine 210, asparagine 211, and serine 251. Isopentenyl diphosphate-binding residues include serine 209, serine 210, asparagine 211, and serine 251.

This sequence belongs to the IspH family. [4Fe-4S] cluster is required as a cofactor.

The enzyme catalyses isopentenyl diphosphate + 2 oxidized [2Fe-2S]-[ferredoxin] + H2O = (2E)-4-hydroxy-3-methylbut-2-enyl diphosphate + 2 reduced [2Fe-2S]-[ferredoxin] + 2 H(+). It catalyses the reaction dimethylallyl diphosphate + 2 oxidized [2Fe-2S]-[ferredoxin] + H2O = (2E)-4-hydroxy-3-methylbut-2-enyl diphosphate + 2 reduced [2Fe-2S]-[ferredoxin] + 2 H(+). It functions in the pathway isoprenoid biosynthesis; dimethylallyl diphosphate biosynthesis; dimethylallyl diphosphate from (2E)-4-hydroxy-3-methylbutenyl diphosphate: step 1/1. It participates in isoprenoid biosynthesis; isopentenyl diphosphate biosynthesis via DXP pathway; isopentenyl diphosphate from 1-deoxy-D-xylulose 5-phosphate: step 6/6. Functionally, catalyzes the conversion of 1-hydroxy-2-methyl-2-(E)-butenyl 4-diphosphate (HMBPP) into a mixture of isopentenyl diphosphate (IPP) and dimethylallyl diphosphate (DMAPP). Acts in the terminal step of the DOXP/MEP pathway for isoprenoid precursor biosynthesis. This chain is 4-hydroxy-3-methylbut-2-enyl diphosphate reductase, found in Thermotoga maritima (strain ATCC 43589 / DSM 3109 / JCM 10099 / NBRC 100826 / MSB8).